Reading from the N-terminus, the 479-residue chain is Phosphoglycerate kinase, glycosomal (479 aa).

12 residues coordinate (2R)-3-phosphoglycerate: Val-23, Asp-24, Phe-25, Asn-26, Arg-39, Ser-61, His-62, Gly-64, Arg-65, Arg-132, His-168, and Arg-169. Residues Gly-214 and Ala-215 each coordinate ADP. Gly-214 is a binding site for CDP. AMP-binding residues include Ala-215 and Lys-216. Ala-215 is an ATP binding site. Ala-215 lines the Mg(2+) pocket. Lys-216 provides a ligand contact to (2R)-3-phosphoglycerate. Asp-219 lines the CDP pocket. A Mg(2+)-binding site is contributed by Asp-219. 2 residues coordinate ADP: Lys-220 and Gly-238. Lys-220 serves as a coordination point for AMP. An ATP-binding site is contributed by Lys-220. Gly-238 lines the CDP pocket. 2 residues coordinate AMP: Ala-239 and Ala-311. Residues Ala-239 and Ala-311 each contribute to the ATP site. ADP is bound by residues Ala-311 and Asn-335. 2 residues coordinate CDP: Gly-336 and Phe-341. 4 residues coordinate ADP: Phe-341, Glu-342, Asp-374, and Thr-375. Glu-342 is a binding site for AMP. 3 residues coordinate ATP: Glu-342, Asp-374, and Thr-375. Residue Asp-374 participates in Mg(2+) binding.

It belongs to the phosphoglycerate kinase family. Monomer. Mg(2+) is required as a cofactor.

Its subcellular location is the glycosome. It carries out the reaction (2R)-3-phosphoglycerate + ATP = (2R)-3-phospho-glyceroyl phosphate + ADP. The protein operates within carbohydrate degradation; glycolysis; pyruvate from D-glyceraldehyde 3-phosphate: step 2/5. This Leishmania mexicana protein is Phosphoglycerate kinase, glycosomal (PGKC).